The sequence spans 501 residues: Lysine--tRNA ligase (501 aa).

The Mg(2+) site is built by glutamate 411 and glutamate 418.

Belongs to the class-II aminoacyl-tRNA synthetase family. Homodimer. It depends on Mg(2+) as a cofactor.

It is found in the cytoplasm. It catalyses the reaction tRNA(Lys) + L-lysine + ATP = L-lysyl-tRNA(Lys) + AMP + diphosphate. The sequence is that of Lysine--tRNA ligase from Clostridium perfringens (strain 13 / Type A).